Reading from the N-terminus, the 295-residue chain is Probable palmitoyltransferase ZDHHC24 (295 aa).

Topologically, residues 1 to 20 (MTSFMSRVWCKVESTGRQLP) are cytoplasmic. A helical transmembrane segment spans residues 21–41 (IVLNAVLVFSITAEVSYLVLV). The Extracellular portion of the chain corresponds to 42–60 (EAPFEPEQKKTDWSTIWTG). A helical transmembrane segment spans residues 61 to 81 (LHLFAQYFMLGNITWNASLFV). The Cytoplasmic portion of the chain corresponds to 82–151 (KTNPSIRGVF…HNYRYFLTCL (70 aa)). The region spanning 102–152 (RYCYNCETHTPPRCSHCYDCNVCVLRRDHHCVFFGQCVGFHNYRYFLTCLL) is the DHHC domain. C132 (S-palmitoyl cysteine intermediate) is an active-site residue. A helical membrane pass occupies residues 152 to 172 (LFMWAGLLYAVVMNAEVFIFI). Topologically, residues 173–176 (LKEG) are extracellular. Residues 177–197 (VTFHSVMLLLVPWIMLVSGQV) form a helical membrane-spanning segment. The Cytoplasmic portion of the chain corresponds to 198–203 (TTRAFA). A helical transmembrane segment spans residues 204 to 224 (FAFIADTCVVGFLLVAAFLFF). Topologically, residues 225–295 (HVALMLRGQT…SLEPKKQAVH (71 aa)) are extracellular.

Belongs to the DHHC palmitoyltransferase family.

It is found in the membrane. It catalyses the reaction L-cysteinyl-[protein] + hexadecanoyl-CoA = S-hexadecanoyl-L-cysteinyl-[protein] + CoA. In terms of biological role, probable palmitoyltransferase that could catalyze the addition of palmitate onto various protein substrates. The sequence is that of Probable palmitoyltransferase ZDHHC24 from Danio rerio (Zebrafish).